The primary structure comprises 124 residues: Small ribosomal subunit protein uS12 (124 aa).

Position 89 is a 3-methylthioaspartic acid (D89).

It belongs to the universal ribosomal protein uS12 family. Part of the 30S ribosomal subunit. Contacts proteins S8 and S17. May interact with IF1 in the 30S initiation complex.

Functionally, with S4 and S5 plays an important role in translational accuracy. In terms of biological role, interacts with and stabilizes bases of the 16S rRNA that are involved in tRNA selection in the A site and with the mRNA backbone. Located at the interface of the 30S and 50S subunits, it traverses the body of the 30S subunit contacting proteins on the other side and probably holding the rRNA structure together. The combined cluster of proteins S8, S12 and S17 appears to hold together the shoulder and platform of the 30S subunit. In Shewanella piezotolerans (strain WP3 / JCM 13877), this protein is Small ribosomal subunit protein uS12.